The primary structure comprises 418 residues: L-rhamnose isomerase (418 aa).

Residues His-262, Asp-294, and Asp-296 each contribute to the Mn(2+) site.

This sequence belongs to the rhamnose isomerase family. Homotetramer. It depends on Mn(2+) as a cofactor.

It is found in the cytoplasm. The catalysed reaction is L-rhamnopyranose = L-rhamnulose. It participates in carbohydrate degradation; L-rhamnose degradation; glycerone phosphate from L-rhamnose: step 1/3. In terms of biological role, catalyzes the interconversion of L-rhamnose and L-rhamnulose. The chain is L-rhamnose isomerase from Cronobacter sakazakii (strain ATCC BAA-894) (Enterobacter sakazakii).